A 398-amino-acid chain; its full sequence is Succinate--CoA ligase [ADP-forming] subunit beta (398 aa).

Positions 9–254 (KALLHEFGVP…ETEEDAKEIE (246 aa)) constitute an ATP-grasp domain. Residues K46, 53–55 (GRG), E109, S112, and E117 contribute to the ATP site. 2 residues coordinate Mg(2+): N209 and D223. Residues N274 and 331–333 (GIM) contribute to the substrate site.

Belongs to the succinate/malate CoA ligase beta subunit family. In terms of assembly, heterotetramer of two alpha and two beta subunits. Mg(2+) serves as cofactor.

The enzyme catalyses succinate + ATP + CoA = succinyl-CoA + ADP + phosphate. It carries out the reaction GTP + succinate + CoA = succinyl-CoA + GDP + phosphate. It participates in carbohydrate metabolism; tricarboxylic acid cycle; succinate from succinyl-CoA (ligase route): step 1/1. Its function is as follows. Succinyl-CoA synthetase functions in the citric acid cycle (TCA), coupling the hydrolysis of succinyl-CoA to the synthesis of either ATP or GTP and thus represents the only step of substrate-level phosphorylation in the TCA. The beta subunit provides nucleotide specificity of the enzyme and binds the substrate succinate, while the binding sites for coenzyme A and phosphate are found in the alpha subunit. The chain is Succinate--CoA ligase [ADP-forming] subunit beta from Bradyrhizobium sp. (strain ORS 278).